Here is a 1067-residue protein sequence, read N- to C-terminus: UPF0507 protein KLLA0D01133g (1067 aa).

The region spanning 280–432 (IVEDQELEHR…FHQDTVDSLT (153 aa)) is the VPS9 domain.

This sequence belongs to the UPF0507 family.

This chain is UPF0507 protein KLLA0D01133g, found in Kluyveromyces lactis (strain ATCC 8585 / CBS 2359 / DSM 70799 / NBRC 1267 / NRRL Y-1140 / WM37) (Yeast).